A 212-amino-acid chain; its full sequence is Outer surface protein C (212 aa).

Residues M1 to S18 form the signal peptide. Residue C19 is the site of N-palmitoyl cysteine attachment. C19 is lipidated: S-diacylglycerol cysteine.

This sequence belongs to the OspC lipoprotein family. In terms of assembly, homodimer. Interacts with tick Ixodes ricinus salivary protein Iric-1. Binds human (host) plasminogen. In terms of processing, the N-terminus is blocked.

The protein localises to the cell outer membrane. Its subcellular location is the cell surface. Its function is as follows. Major immunodominant protein in mammalian hosts. Required for initial stages of mammalian infection. Inhibits macrophage-mediated phagocytosis of the bacteria. Binds human plasminogen; this probably confers an extracellular protease activity on the bacteria that allows it to traverse tissue. Unlike closely related strain B31, its interaction with Ixodes ricinus salivary protein Iric-1 does not protect against antibody-mediated destruction in vitro. The polypeptide is Outer surface protein C (Borreliella afzelii (strain PKo) (Borrelia afzelii)).